The primary structure comprises 158 residues: UPF0260 protein RHE_CH01262 (158 aa).

It belongs to the UPF0260 family.

This is UPF0260 protein RHE_CH01262 from Rhizobium etli (strain ATCC 51251 / DSM 11541 / JCM 21823 / NBRC 15573 / CFN 42).